A 1029-amino-acid chain; its full sequence is Pro-apoptotic serine protease NMA111 (1029 aa).

The interval 1–49 (MNGPTSQRAKRKQGSASSLDDRPPKHQRALNGAKQQSTGDNTPEEDMYD) is disordered. A serine protease region spans residues 84–274 (VVSIRFCQTC…LPLDRPLRAL (191 aa)). Active-site charge relay system residues include histidine 122, aspartate 153, and serine 235. PDZ domains are found at residues 307–379 (PEWE…QRGG) and 845–958 (EFLG…VTFD). The interval 997–1029 (KAMEGEPSEGVPAVEEEAGGAVDDDVPMAAVEK) is disordered. The segment covering 1010–1022 (VEEEAGGAVDDDV) has biased composition (acidic residues).

It belongs to the peptidase S1C family.

The protein resides in the nucleus. Functionally, nuclear serine protease which mediates apoptosis. The protein is Pro-apoptotic serine protease NMA111 (NMA111) of Pyricularia oryzae (strain 70-15 / ATCC MYA-4617 / FGSC 8958) (Rice blast fungus).